The following is a 249-amino-acid chain: MKILIAEHYEELCKLSAAIIKEQIQAKKDAVLGLATGSTPVGLYKQLISDYQAGEIDFSKVTTFNLDEYAGLSPSHPQSYNHFMHEHLFQHINMQPDHIHIPQGDNPQLEAACKVYEDLIRQAGGIDVQILGIGANGHIGFNEPGSDFEDRTRVVKLSESTIQANARFFGGDPVLVPRLAISMGIKTIMEFSKHIVLLASGEEKADAIQKMAEGPVTTDVPASILQKHNHVTVIADYKAAQKLKSASFS.

Aspartate 67 acts as the Proton acceptor; for enolization step in catalysis. Residue asparagine 136 is the For ring-opening step of the active site. Histidine 138 functions as the Proton acceptor; for ring-opening step in the catalytic mechanism. The active-site For ring-opening step is the glutamate 143.

This sequence belongs to the glucosamine/galactosamine-6-phosphate isomerase family. NagB subfamily.

The catalysed reaction is alpha-D-glucosamine 6-phosphate + H2O = beta-D-fructose 6-phosphate + NH4(+). It functions in the pathway amino-sugar metabolism; N-acetylneuraminate degradation; D-fructose 6-phosphate from N-acetylneuraminate: step 5/5. Its function is as follows. Catalyzes the reversible isomerization-deamination of glucosamine 6-phosphate (GlcN6P) to form fructose 6-phosphate (Fru6P) and ammonium ion. Required for growth on glucosamine and also provides the majority of GlcN6P deaminase activity during growth on N-acetylglucosamine (GlcNAc). This Bacillus subtilis (strain 168) protein is Glucosamine-6-phosphate deaminase 2.